Reading from the N-terminus, the 387-residue chain is Pepsin A (387 aa).

Positions 1–16 (MKKLLLLLGLVALSEC) are cleaved as a signal peptide. The propeptide at 17-61 (LYKVPLVKKKSLRQNLIENGLLKDFLAKHNVNPASKYFPTEAATE) is activation peptide. In terms of domain architecture, Peptidase A1 spans 75–384 (YFGTIGIGTP…DRGNNRVGLA (310 aa)). Asp93 is an active-site residue. A disulfide bridge connects residues Cys106 and Cys111. Ser129 carries the post-translational modification Phosphoserine. Cys267 and Cys271 are oxidised to a cystine. The active site involves Asp276. Cys310 and Cys343 are disulfide-bonded.

It belongs to the peptidase A1 family.

The protein resides in the secreted. The enzyme catalyses Preferential cleavage: hydrophobic, preferably aromatic, residues in P1 and P1' positions. Cleaves 1-Phe-|-Val-2, 4-Gln-|-His-5, 13-Glu-|-Ala-14, 14-Ala-|-Leu-15, 15-Leu-|-Tyr-16, 16-Tyr-|-Leu-17, 23-Gly-|-Phe-24, 24-Phe-|-Phe-25 and 25-Phe-|-Tyr-26 bonds in the B chain of insulin.. Functionally, shows particularly broad specificity; although bonds involving phenylalanine and leucine are preferred, many others are also cleaved to some extent. The protein is Pepsin A (PGA) of Suncus murinus (Asian house shrew).